The sequence spans 510 residues: Metalloprotease TIKI homolog (510 aa).

The signal sequence occupies residues 1-30; that stretch reads MQVKIVQVFPCLVLLVKLVLLSVLLPSATG. The Extracellular portion of the chain corresponds to 31–489; sequence SYHCSNNATQ…FIPSASSGLR (459 aa). Residues N37, N98, N108, N141, N223, N281, N322, N383, and N417 are each glycosylated (N-linked (GlcNAc...) asparagine). The span at 435–471 shows a compositional bias: low complexity; it reads TSLNSATASTTVATPTSSVTPPTSSSSQTRSLTISDS. A disordered region spans residues 435–477; it reads TSLNSATASTTVATPTSSVTPPTSSSSQTRSLTISDSQRTSDD. Residues 490–510 form a helical membrane-spanning segment; sequence YNIGLVCVTLFFVLLIITSAL.

Belongs to the TIKI family. It depends on Mn(2+) as a cofactor. Co(2+) serves as cofactor.

Its subcellular location is the membrane. Its function is as follows. Metalloprotease. In Amphimedon queenslandica (Sponge), this protein is Metalloprotease TIKI homolog.